We begin with the raw amino-acid sequence, 714 residues long: Cyclomaltodextrin glucanotransferase (714 aa).

The first 27 residues, 1-27, serve as a signal peptide directing secretion; that stretch reads MKSRYKRLTSLALSLSMALGISLPAWA. The interval 28 to 165 is A1; the sequence is SPDTSVDNKV…NIKVVIDFAP (138 aa). Ca(2+) contacts are provided by aspartate 54, asparagine 59, asparagine 60, glycine 78, and aspartate 80. 127-128 contributes to the substrate binding site; that stretch reads YW. Ca(2+) is bound at residue asparagine 166. A b region spans residues 166 to 229; the sequence is NHTSPADRDN…NLYDLADINH (64 aa). Histidine 167 is a binding site for substrate. Isoleucine 217 is a binding site for Ca(2+). Position 220–223 (220–223) interacts with substrate; sequence NLYD. Aspartate 226 contributes to the Ca(2+) binding site. Residues 230–434 are A2; it reads NNNAMDAYFK…LRKSNPAIAY (205 aa). Residue arginine 254 participates in substrate binding. Residue aspartate 256 is the Nucleophile of the active site. 259 to 260 lines the substrate pocket; that stretch reads KH. Residue histidine 260 participates in Ca(2+) binding. Glutamate 285 functions as the Proton donor in the catalytic mechanism. Substrate-binding residues include histidine 355, aspartate 399, and arginine 403. The c stretch occupies residues 435–523; it reads GTTTERWVNN…GTAVWQYTAP (89 aa). The segment at 524 to 610 is d; sequence ETSPAIGNVG…SNTFKSFNVL (87 aa). The IPT/TIG domain maps to 527–607; it reads PAIGNVGPTM…GTASNTFKSF (81 aa). The CBM20 domain maps to 609–714; that stretch reads VLTGDQVTVR…VGTVTVDWQN (106 aa). Residues 611 to 714 are e; it reads TGDQVTVRFL…VGTVTVDWQN (104 aa).

The protein belongs to the glycosyl hydrolase 13 family. In terms of assembly, monomer. Ca(2+) is required as a cofactor.

The protein localises to the secreted. It carries out the reaction Cyclizes part of a (1-&gt;4)-alpha-D-glucan chain by formation of a (1-&gt;4)-alpha-D-glucosidic bond.. The sequence is that of Cyclomaltodextrin glucanotransferase (cgtM) from Paenibacillus macerans (Bacillus macerans).